Here is a 353-residue protein sequence, read N- to C-terminus: Photosystem II protein D1 (353 aa).

The residue at position 2 (Thr-2) is an N-acetylthreonine. A Phosphothreonine modification is found at Thr-2. A run of 3 helical transmembrane segments spans residues 29–46, 118–133, and 142–156; these read YIGW…TATS, HFLL…EWEL, and WIAV…AATA. Residue His-118 coordinates chlorophyll a. Tyr-126 lines the pheophytin a pocket. [CaMn4O5] cluster is bound by residues Asp-170 and Glu-189. The helical transmembrane segment at 197–218 threads the bilayer; sequence FHMLGVAGVFGGSLFSAMHGSL. Position 198 (His-198) interacts with chlorophyll a. A quinone contacts are provided by residues His-215 and 264-265; that span reads SF. A Fe cation-binding site is contributed by His-215. His-272 serves as a coordination point for Fe cation. A helical membrane pass occupies residues 274-288; that stretch reads FLAAWPVVGIWFTAL. 4 residues coordinate [CaMn4O5] cluster: His-332, Glu-333, Asp-342, and Ala-344. Residues 345–353 constitute a propeptide that is removed on maturation; it reads SIEAPLVNG.

Belongs to the reaction center PufL/M/PsbA/D family. PSII is composed of 1 copy each of membrane proteins PsbA, PsbB, PsbC, PsbD, PsbE, PsbF, PsbH, PsbI, PsbJ, PsbK, PsbL, PsbM, PsbT, PsbX, PsbY, PsbZ, Psb30/Ycf12, at least 3 peripheral proteins of the oxygen-evolving complex and a large number of cofactors. It forms dimeric complexes. The D1/D2 heterodimer binds P680, chlorophylls that are the primary electron donor of PSII, and subsequent electron acceptors. It shares a non-heme iron and each subunit binds pheophytin, quinone, additional chlorophylls, carotenoids and lipids. D1 provides most of the ligands for the Mn4-Ca-O5 cluster of the oxygen-evolving complex (OEC). There is also a Cl(-1) ion associated with D1 and D2, which is required for oxygen evolution. The PSII complex binds additional chlorophylls, carotenoids and specific lipids. serves as cofactor. Post-translationally, tyr-161 forms a radical intermediate that is referred to as redox-active TyrZ, YZ or Y-Z. In terms of processing, C-terminally processed by CTPA; processing is essential to allow assembly of the oxygen-evolving complex and thus photosynthetic growth.

It localises to the plastid. The protein resides in the chloroplast thylakoid membrane. The catalysed reaction is 2 a plastoquinone + 4 hnu + 2 H2O = 2 a plastoquinol + O2. In terms of biological role, photosystem II (PSII) is a light-driven water:plastoquinone oxidoreductase that uses light energy to abstract electrons from H(2)O, generating O(2) and a proton gradient subsequently used for ATP formation. It consists of a core antenna complex that captures photons, and an electron transfer chain that converts photonic excitation into a charge separation. The D1/D2 (PsbA/PsbD) reaction center heterodimer binds P680, the primary electron donor of PSII as well as several subsequent electron acceptors. The chain is Photosystem II protein D1 from Psilotum nudum (Whisk fern).